The following is an 874-amino-acid chain: Cap-specific mRNA (nucleoside-2'-O-)-methyltransferase 1A (874 aa).

Over residues 1–10 (MSERGDDDRT) the composition is skewed to basic and acidic residues. The interval 1-64 (MSERGDDDRT…APPTKQKTKA (64 aa)) is disordered. The G-patch domain maps to 60 to 106 (QKTKAEEMMERMGYKAGEGLGKNKQGIQEPVALSTQRGKTGLGHEGA). A RrmJ-type SAM-dependent 2'-O-MTase domain is found at 211-440 (FFQNRAAMKT…ERYITCKGLR (230 aa)). G273 and D354 together coordinate S-adenosyl-L-methionine. K394 serves as the catalytic Proton acceptor. The interval 535-555 (PNKQRPRGGDRGSRNGNQERL) is disordered.

It catalyses the reaction a 5'-end (N(7)-methyl 5'-triphosphoguanosine)-ribonucleoside in mRNA + S-adenosyl-L-methionine = a 5'-end (N(7)-methyl 5'-triphosphoguanosine)-(2'-O-methyl-ribonucleoside) in mRNA + S-adenosyl-L-homocysteine + H(+). In terms of biological role, S-adenosyl-L-methionine-dependent methyltransferase that mediates mRNA cap1 2'-O-ribose methylation to the 5'-cap structure of mRNAs. Methylates the ribose of the first nucleotide of a m(7)GpppG-capped mRNA to produce m(7)GpppNmp (cap1). Cap1 modification is linked to higher levels of translation. The protein is Cap-specific mRNA (nucleoside-2'-O-)-methyltransferase 1A of Caenorhabditis briggsae.